Reading from the N-terminus, the 88-residue chain is Small ribosomal subunit protein uS17 (88 aa).

This sequence belongs to the universal ribosomal protein uS17 family. As to quaternary structure, part of the 30S ribosomal subunit.

One of the primary rRNA binding proteins, it binds specifically to the 5'-end of 16S ribosomal RNA. This is Small ribosomal subunit protein uS17 from Ectopseudomonas mendocina (strain ymp) (Pseudomonas mendocina).